The chain runs to 105 residues: Photosystem II 5 kDa protein, chloroplastic (105 aa).

The transit peptide at 1–77 directs the protein to the chloroplast; the sequence is MASITMTTSF…ICSVAGVATA (77 aa).

Post-translationally, the maturation of the PSII-T precursor to its final form occurs through a two step process. First, a stromal intermediate is formed, which, upon translocation into the thylakoid membrane, is processed to the mature protein.

It localises to the plastid. The protein localises to the chloroplast thylakoid membrane. In terms of biological role, may be a component of the oxygen-evolving complex. The protein is Photosystem II 5 kDa protein, chloroplastic (PSBT) of Gossypium hirsutum (Upland cotton).